The chain runs to 444 residues: Lycopaoctaene synthase (444 aa).

NADP(+) contacts are provided by R48 and R73. Residues D76, E79, and D80 each coordinate Mg(2+). The NADP(+) site is built by R215, K315, and R317. The next 2 helical transmembrane spans lie at 391–411 (TAMVLAGALLIAALAYFAYVY) and 415–435 (GTSLKALPLFGVVIILAIGLF).

The protein belongs to the phytoene/squalene synthase family. Mg(2+) serves as cofactor.

It is found in the membrane. The catalysed reaction is 2 (2E,6E)-farnesyl diphosphate + NADH + H(+) = squalene + 2 diphosphate + NAD(+). It catalyses the reaction 2 (2E,6E)-farnesyl diphosphate + NADPH + H(+) = squalene + 2 diphosphate + NADP(+). The enzyme catalyses 2 (2E,6E,10E)-geranylgeranyl diphosphate + NADPH + H(+) = all-trans-lycopaoctaene + 2 diphosphate + NADP(+). Functionally, converts the C20 geranylgeranyl diphosphate (GGPP) to the C40 lycopaoctaene, the first committed intermediate in the production of lycopadiene. Converts farnesyl diphosphate (FPP) into squalene, a precursor for sterol biosynthesis in eukaryotes. Converts with low efficiency the C20 phytyl diphosphate (PPP) to the C40 lycopadiene in vitro. This reaction may not have biological significance in vivo. The chain is Lycopaoctaene synthase from Botryococcus braunii (Green alga).